The following is a 249-amino-acid chain: Isoprenyl transferase (249 aa).

Aspartate 25 is a catalytic residue. Residue aspartate 25 coordinates Mg(2+). Substrate is bound by residues 26 to 29 (GNGR), tryptophan 30, arginine 38, histidine 42, and 70 to 72 (STE). Asparagine 73 functions as the Proton acceptor in the catalytic mechanism. Substrate contacts are provided by residues tryptophan 74, arginine 76, arginine 197, and 203–205 (RLS). A Mg(2+)-binding site is contributed by glutamate 216.

It belongs to the UPP synthase family. Homodimer. The cofactor is Mg(2+).

In terms of biological role, catalyzes the condensation of isopentenyl diphosphate (IPP) with allylic pyrophosphates generating different type of terpenoids. The polypeptide is Isoprenyl transferase (Streptococcus pyogenes serotype M1).